The chain runs to 111 residues: MAKQEKQPKSARQKIRIRLKGYDQRLLDRSTGDIVETAKRTGAAIAGPIPLPTSCEKFTVLRSPNIDRKSREQFEIRTHRRLIDILNPTSKTIDALKTLTLPAGVDIKIKA.

The protein belongs to the universal ribosomal protein uS10 family. As to quaternary structure, part of the 30S ribosomal subunit.

Involved in the binding of tRNA to the ribosomes. This Protochlamydia amoebophila (strain UWE25) protein is Small ribosomal subunit protein uS10.